Here is a 120-residue protein sequence, read N- to C-terminus: Seripauperin-13 (120 aa).

The signal sequence occupies residues 1–25 (MVKLTSIAAGVAAIAATASATTTLA).

It belongs to the SRP1/TIP1 family. Seripauperin subfamily.

The protein is Seripauperin-13 (PAU13) of Saccharomyces cerevisiae (strain ATCC 204508 / S288c) (Baker's yeast).